An 87-amino-acid chain; its full sequence is Protein anon-73B1 (87 aa).

The chain crosses the membrane as a helical span at residues 25–47; sequence LLIRYGLYVGALFQFVCISAAVL. The segment at 52 to 87 is disordered; the sequence is PDVNSNPETGEVTEREGEPVRTRLHKIRKLEKKKRR. Positions 63-72 are enriched in basic and acidic residues; it reads VTEREGEPVR. Residues 73–87 are compositionally biased toward basic residues; the sequence is TRLHKIRKLEKKKRR.

The protein belongs to the UPF0239 family.

Its subcellular location is the membrane. The polypeptide is Protein anon-73B1 (Drosophila erecta (Fruit fly)).